An 87-amino-acid chain; its full sequence is Putative septation protein SpoVG (87 aa).

It belongs to the SpoVG family.

Functionally, could be involved in septation. In Agathobacter rectalis (strain ATCC 33656 / DSM 3377 / JCM 17463 / KCTC 5835 / VPI 0990) (Eubacterium rectale), this protein is Putative septation protein SpoVG.